A 331-amino-acid chain; its full sequence is 6-phosphogluconolactonase (331 aa).

Belongs to the cycloisomerase 2 family.

It carries out the reaction 6-phospho-D-glucono-1,5-lactone + H2O = 6-phospho-D-gluconate + H(+). The protein operates within carbohydrate degradation; pentose phosphate pathway; D-ribulose 5-phosphate from D-glucose 6-phosphate (oxidative stage): step 2/3. Its function is as follows. Catalyzes the hydrolysis of 6-phosphogluconolactone to 6-phosphogluconate. The protein is 6-phosphogluconolactonase of Salmonella agona (strain SL483).